Here is a 273-residue protein sequence, read N- to C-terminus: Cell division protein FtsQ (273 aa).

Topologically, residues 1-10 (MWNDARTINL) are cytoplasmic. The chain crosses the membrane as a helical span at residues 11-31 (IANTLAVLAVAAMLLAGVAWV). Over 32 to 273 (AQRPYFTLAA…HSKSKPAKKR (242 aa)) the chain is Periplasmic. The 74-residue stretch at 37–110 (FTLAAIEIES…NTLRVRVEEQ (74 aa)) folds into the POTRA domain.

This sequence belongs to the FtsQ/DivIB family. FtsQ subfamily. As to quaternary structure, part of a complex composed of FtsB, FtsL and FtsQ.

It localises to the cell inner membrane. Essential cell division protein. May link together the upstream cell division proteins, which are predominantly cytoplasmic, with the downstream cell division proteins, which are predominantly periplasmic. May control correct divisome assembly. The polypeptide is Cell division protein FtsQ (Bordetella pertussis (strain Tohama I / ATCC BAA-589 / NCTC 13251)).